The sequence spans 388 residues: Na(+)/H(+) antiporter NhaA (388 aa).

11 consecutive transmembrane segments (helical) span residues 14–34, 59–79, 95–115, 125–145, 154–174, 179–199, 219–239, 254–274, 287–307, 328–348, and 356–376; these read GGIILIIAAVLAMLMANSGFT, MLLWINDALMAVFFLLIGLEV, AFPVIAAIGGMIVPALLYLAF, GWAIPAATDIAFALGVLALLG, IFLMALAIIDDLGAIVIIALF, LSMVSLGVAAFAIVLLAVLNL, VLKSGVHATLAGVIVGFFIPL, VLHPWVAYLILPLFAFANAGV, ILPLGIIAGLLIGKPLGISLF, IMAVGILCGIGFTMSIFIASL, and ALINWAKLGILIGSLLSAVIG.

It belongs to the NhaA Na(+)/H(+) (TC 2.A.33) antiporter family.

Its subcellular location is the cell inner membrane. The catalysed reaction is Na(+)(in) + 2 H(+)(out) = Na(+)(out) + 2 H(+)(in). In terms of biological role, na(+)/H(+) antiporter that extrudes sodium in exchange for external protons. This Citrobacter koseri (strain ATCC BAA-895 / CDC 4225-83 / SGSC4696) protein is Na(+)/H(+) antiporter NhaA.